Reading from the N-terminus, the 371-residue chain is UDP-N-acetylglucosamine--N-acetylmuramyl-(pentapeptide) pyrophosphoryl-undecaprenol N-acetylglucosamine transferase (371 aa).

UDP-N-acetyl-alpha-D-glucosamine is bound by residues 10–12 (TGG), Asn122, Arg166, Ser196, and Gln301.

This sequence belongs to the glycosyltransferase 28 family. MurG subfamily.

Its subcellular location is the cell inner membrane. It catalyses the reaction di-trans,octa-cis-undecaprenyl diphospho-N-acetyl-alpha-D-muramoyl-L-alanyl-D-glutamyl-meso-2,6-diaminopimeloyl-D-alanyl-D-alanine + UDP-N-acetyl-alpha-D-glucosamine = di-trans,octa-cis-undecaprenyl diphospho-[N-acetyl-alpha-D-glucosaminyl-(1-&gt;4)]-N-acetyl-alpha-D-muramoyl-L-alanyl-D-glutamyl-meso-2,6-diaminopimeloyl-D-alanyl-D-alanine + UDP + H(+). It functions in the pathway cell wall biogenesis; peptidoglycan biosynthesis. In terms of biological role, cell wall formation. Catalyzes the transfer of a GlcNAc subunit on undecaprenyl-pyrophosphoryl-MurNAc-pentapeptide (lipid intermediate I) to form undecaprenyl-pyrophosphoryl-MurNAc-(pentapeptide)GlcNAc (lipid intermediate II). The chain is UDP-N-acetylglucosamine--N-acetylmuramyl-(pentapeptide) pyrophosphoryl-undecaprenol N-acetylglucosamine transferase from Halothermothrix orenii (strain H 168 / OCM 544 / DSM 9562).